The sequence spans 149 residues: Urease accessory protein UreE (149 aa).

It belongs to the UreE family.

It localises to the cytoplasm. Involved in urease metallocenter assembly. Binds nickel. Probably functions as a nickel donor during metallocenter assembly. The chain is Urease accessory protein UreE from Corynebacterium efficiens (strain DSM 44549 / YS-314 / AJ 12310 / JCM 11189 / NBRC 100395).